The following is a 3433-amino-acid chain: MSKKPGGPGKSRAVNMLKRGMPRVLSLIGLKRAMLSLIDGKGPIRFVLALLAFFRFTAIAPTRAVLDRWRGVNKQTAMKHLLSFKKELGTLTSAINRRSSKQKKRGGKTGIAVMIGLIASVGAVTLSNFQGKVMMTVNATDVTDVITIPTAAGKNLCIVRAMDVGYMCDDTITYECPVLSAGNDPEDIDCWCTKSAVYVRYGRCTKTRHSRRSRRSLTVQTHGESTLANKKGAWMDSTKATRYLVKTESWILRNPGYALVAAVIGWMLGSNTMQRVVFVVLLLLVAPAYSFNCLGMSNRDFLEGVSGATWVDLVLEGDSCVTIMSKDKPTIDVKMMNMEAANLAEVRSYCYLATVSDLSTKAACPTMGEAHNDKRADPAFVCRQGVVDRGWGNGCGLFGKGSIDTCAKFACSTKAIGRTILKENIKYEVAIFVHGPTTVESHGNYSTQVGATQAGRFSITPAAPSYTLKLGEYGEVTVDCEPRSGIDTNAYYVMTVGTKTFLVHREWFMDLNLPWSSAGSTVWRNRETLMEFEEPHATKQSVIALGSQEGALHQALAGAIPVEFSSNTVKLTSGHLKCRVKMEKLQLKGTTYGVCSKAFKFLGTPADTGHGTVVLELQYTGTDGPCKVPISSVASLNDLTPVGRLVTVNPFVSVATANAKVLIELEPPFGDSYIVVGRGEQQINHHWHKSGSSIGKAFTTTLKGAQRLAALGDTAWDFGSVGGVFTSVGKAVHQVFGGAFRSLFGGMSWITQGLLGALLLWMGINARDRSIALTFLAVGGVLLFLSVNVHADTGCAIDISRQELRCGSGVFIHNDVEAWMDRYKYYPETPQGLAKIIQKAHKEGVCGLRSVSRLEHQMWEAVKDELNTLLKENGVDLSVVVEKQEGMYKSAPKRLTATTEKLEIGWKAWGKSILFAPELANNTFVVDGPETKECPTQNRAWNSLEVEDFGFGLTSTRMFLKVRESNTTECDSKIIGTAVKNNLAIHSDLSYWIESRLNDTWKLERAVLGEVKSCTWPETHTLWGDGILESDLIIPVTLAGPRSNHNRRPGYKTQNQGPWDEGRVEIDFDYCPGTTVTLSESCGHRGPATRTTTESGKLITDWCCRSCTLPPLRYQTDSGCWYGMEIRPQRHDEKTLVQSQVNAYNADMIDPFQLGLLVVFLATQEVLRKRWTAKISMPAILIALLVLVFGGITYTDVLRYVILVGAAFAESNSGGDVVHLALMATFKIQPVFMVASFLKARWTNQENILLMLAAVFFQMAYHDARQILLWEIPDVLNSLAVAWMILRAITFTTTSNVVVPLLALLTPGLRCLNLDVYRILLLMVGIGSLIREKRSAAAKKKGASLLCLALASTGLFNPMILAAGLIACDPNRKRGWPATEVMTAVGLMFAIVGGLAELDIDSMAIPMTIAGLMFAAFVISGKSTDMWIERTADISWESDAEITGSSERVDVRLDDDGNFQLMNDPGAPWKIWMLRMVCLAISAYTPWAILPSVVGFWITLQYTKRGGVLWDTPSPKEYKKGDTTTGVYRIMTRGLLGSYQAGAGVMVEGVFHTLWHTTKGAALMSGEGRLDPYWGSVKEDRLCYGGPWKLQHKWNGQDEVQMIVVEPGKNVKNVQTKPGVFKTPEGEIGAVTLDFPTGTSGSPIVDKNGDVIGLYGNGVIMPNGSYISAIVQGERMDEPIPAGFEPEMLRKKQITVLDLHPGAGKTRRILPQIIKEAINRRLRTAVLAPTRVVAAEMAEALRGLPIRYQTSAVPREHNGNEIVDVMCHATLTHRLMSPHRVPNYNLFVMDEAHFTDPASIAARGYISTKVELGEAAAIFMTATPPGTSDPFPESNSPISDLQTEIPDRAWNSGYEWITEYTGKTVWFVPSVKMGNEIALCLQRAGKKVVQLNRKSYETEYPKCKNDDWDFVITTDISEMGANFKASRVIDSRKSVKPTIITEGEGRVILGEPSAVTAASAAQRRGRIGRNPSQVGDEYCYGGHTNEDDSNFAHWTEARIMLDNINMPNGLIAQFYQPEREKVYTMDGEYRLRGEERKNFLELLRTADLPVWLAYKVAAAGVSYHDRRWCFDGPRTNTILEDNNEVEVITKLGERKILRPRWIDARVYSDHQALKAFKDFASGKRSQIGLIEVLGKMPEHFMGKTWEALDTMYVVATAEKGGRAHRMALEELPDALQTIALIALLSVMTMGVFFLLMQRKGIGKIGLGGAVLGVATFFCWMAEVPGTKIAGMLLLSLLLMIVLIPEPEKQRSQTDNQLAVFLICVMTLVSAVAANEMGWLDKTKSDISSLFGQRIEVKENFSMGEFLLDLRPATAWSLYAVTTAVLTPLLKHLITSDYINTSLTSINVQASALFTLARGFPFVDVGVSALLLAAGCWGQVTLTVTVTAATLLFCHYAYMVPGWQAEAMRSAQRRTAAGIMKNAVVDGIVATDVPELERTTPIMQKKVGQIMLILVSLAAVVVNPSVKTVREAGILITAAAVTLWENGASSVWNATTAIGLCHIMRGGWLSCLSITWTLIKNMEKPGLKRGGAKGRTLGEVWKERLNQMTKEEFTRYRKEAIIEVDRSAAKHARKEGNVTGGHPVSRGTAKLRWLVERRFLEPVGKVIDLGCGRGGWCYYMATQKRVQEVRGYTKGGPGHEEPQLVQSYGWNIVTMKSGVDVFYRPSECCDTLLCDIGESSSSAEVEEHRTIRVLEMVEDWLHRGPREFCVKVLCPYMPKVIEKMELLQRRYGGGLVRNPLSRNSTHEMYWVSRASGNVVHSVNMTSQVLLGRMEKRTWKGPQYEEDVNLGSGTRAVGKPLLNSDTSKIKNRIERLRREYSSTWHHDENHPYRTWNYHGSYDVKPTGSASSLVNGVVRLLSKPWDTITNVTTMAMTDTTPFGQQRVFKEKVDTKAPEPPEGVKYVLNETTNWLWAFLAREKRPRMCSREEFIRKVNSNAALGAMFEEQNQWRSAREAVEDPKFWEMVDEEREAHLRGECHTCIYNMMGKREKKPGEFGKAKGSRAIWFMWLGARFLEFEALGFLNEDHWLGRKNSGGGVEGLGLQKLGYILREVGTRPGGKIYADDTAGWDTRITRADLENEAKVLELLDGEHRRLARAIIELTYRHKVVKVMRPAADGRTVMDVISREDQRGSGQVVTYALNTFTNLAVQLVRMMEGEGVIGPDDVEKLTKGKGPKVRTWLFENGEERLSRMAVSGDDCVVKPLDDRFATSLHFLNAMSKVRKDIQEWKPSTGWYDWQQVPFCSNHFTELIMKDGRTLVVPCRGQDELVGRARISPGAGWNVRDTACLAKSYAQMWLLLYFHRRDLRLMANAICSAVPVNWVPTGRTTWSIHAGGEWMTTEDMLEVWNRVWIEENEWMEDKTPVEKWSDVPYSGKREDIWCGSLIGTRARATWAENIQVAINQVRAIIGDEKYVDYMSSLKRYEDTTLVEDTVL.

The tract at residues 2-15 (SKKPGGPGKSRAVN) is interaction with host EXOC1. The Cytoplasmic segment spans residues 2–108 (SKKPGGPGKS…SSKQKKRGGK (107 aa)). The tract at residues 37–72 (LIDGKGPIRFVLALLAFFRFTAIAPTRAVLDRWRGV) is hydrophobic; homodimerization of capsid protein C. A propeptide spans 106–123 (GGKTGIAVMIGLIASVGA) (ER anchor for the capsid protein C, removed in mature form by serine protease NS3). A helical transmembrane segment spans residues 109-129 (TGIAVMIGLIASVGAVTLSNF). The Extracellular portion of the chain corresponds to 130-248 (QGKVMMTVNA…KATRYLVKTE (119 aa)). N138 is a glycosylation site (N-linked (GlcNAc...) asparagine; by host). Residues 249 to 269 (SWILRNPGYALVAAVIGWMLG) form a helical membrane-spanning segment. The Cytoplasmic segment spans residues 270 to 275 (SNTMQR). Residues 276–290 (VVFVVLLLLVAPAYS) form a helical membrane-spanning segment. Residues 291–743 (FNCLGMSNRD…QVFGGAFRSL (453 aa)) are Extracellular-facing. 6 disulfides stabilise this stretch: C293–C320, C350–C406, C350–C411, C364–C395, C382–C406, and C382–C411. Residues 388–401 (DRGWGNGCGLFGKG) form a fusion peptide region. A glycan (N-linked (GlcNAc...) asparagine; by host) is linked at N444. 2 disulfides stabilise this stretch: C480–C578 and C595–C626. The helical transmembrane segment at 744-764 (FGGMSWITQGLLGALLLWMGI) threads the bilayer. At 765-770 (NARDRS) the chain is on the cytoplasmic side. The chain crosses the membrane as a helical span at residues 771-791 (IALTFLAVGGVLLFLSVNVHA). At 792-1216 (DTGCAIDISR…AFAESNSGGD (425 aa)) the chain is on the extracellular side. 2 disulfide bridges follow: C795–C806 and C846–C934. 3 N-linked (GlcNAc...) asparagine; by host glycosylation sites follow: N921, N966, and N998. Cystine bridges form between C970–C1014, C1071–C1120, C1082–C1103, and C1104–C1107. Residues 1217-1237 (VVHLALMATFKIQPVFMVASF) form a helical membrane-spanning segment. The Cytoplasmic segment spans residues 1238-1245 (LKARWTNQ). The helical transmembrane segment at 1246 to 1268 (ENILLMLAAVFFQMAYHDARQIL) threads the bilayer. The Lumenal portion of the chain corresponds to 1269-1288 (LWEIPDVLNSLAVAWMILRA). Residues 1289–1309 (ITFTTTSNVVVPLLALLTPGL) form a helical membrane-spanning segment. Residues 1310–1313 (RCLN) lie on the Cytoplasmic side of the membrane. Residues 1314–1331 (LDVYRILLLMVGIGSLIR) traverse the membrane as a helical segment. Residues 1332 to 1345 (EKRSAAAKKKGASL) are Lumenal-facing. The helical transmembrane segment at 1346–1366 (LCLALASTGLFNPMILAAGLI) threads the bilayer. The Cytoplasmic segment spans residues 1367–1375 (ACDPNRKRG). A helical membrane pass occupies residues 1376–1396 (WPATEVMTAVGLMFAIVGGLA). Topologically, residues 1397–1399 (ELD) are lumenal. The chain crosses the membrane as a helical span at residues 1400 to 1420 (IDSMAIPMTIAGLMFAAFVIS). Over 1421–1477 (GKSTDMWIERTADISWESDAEITGSSERVDVRLDDDGNFQLMNDPGAPWKIWMLRMV) the chain is Cytoplasmic. An interacts with and activates NS3 protease region spans residues 1428–1467 (IERTADISWESDAEITGSSERVDVRLDDDGNFQLMNDPGA). An intramembrane region (helical) is located at residues 1478 to 1498 (CLAISAYTPWAILPSVVGFWI). Over 1499–2174 (TLQYTKRGGV…RMALEELPDA (676 aa)) the chain is Cytoplasmic. One can recognise a Peptidase S7 domain in the interval 1506-1683 (GGVLWDTPSP…ERMDEPIPAG (178 aa)). Catalysis depends on charge relay system; for serine protease NS3 activity residues H1556, D1580, and S1640. The Helicase ATP-binding domain maps to 1686 to 1842 (PEMLRKKQIT…ESNSPISDLQ (157 aa)). Residues 1690–1693 (RKKQ) form an important for RNA-binding region. 1699 to 1706 (LHPGAGKT) provides a ligand contact to ATP. The short motif at 1790–1793 (DEAH) is the DEAH box element. The Helicase C-terminal domain occupies 1853–2018 (GYEWITEYTG…GLIAQFYQPE (166 aa)). Residue K1894 is modified to N6-acetyllysine; by host. Positions 2169 to 2173 (EELPD) are regulates the ATPase activity of NS3 helicase. Residues 2175–2195 (LQTIALIALLSVMTMGVFFLL) form a helical membrane-spanning segment. The Lumenal portion of the chain corresponds to 2196–2200 (MQRKG). The segment at residues 2201–2221 (IGKIGLGGAVLGVATFFCWMA) is an intramembrane region (helical). A topological domain (lumenal) is located at residue E2222. The helical transmembrane segment at 2223 to 2243 (VPGTKIAGMLLLSLLLMIVLI) threads the bilayer. The Cytoplasmic segment spans residues 2244-2258 (PEPEKQRSQTDNQLA). Residues 2259–2279 (VFLICVMTLVSAVAANEMGWL) form a helical membrane-spanning segment. The Lumenal portion of the chain corresponds to 2280-2312 (DKTKSDISSLFGQRIEVKENFSMGEFLLDLRPA). The segment at residues 2313 to 2333 (TAWSLYAVTTAVLTPLLKHLI) is an intramembrane region (helical). At 2334–2380 (TSDYINTSLTSINVQASALFTLARGFPFVDVGVSALLLAAGCWGQVT) the chain is on the lumenal side. Residues 2381-2401 (LTVTVTAATLLFCHYAYMVPG) form a helical membrane-spanning segment. The Cytoplasmic segment spans residues 2402 to 2444 (WQAEAMRSAQRRTAAGIMKNAVVDGIVATDVPELERTTPIMQK). Residues 2445-2465 (KVGQIMLILVSLAAVVVNPSV) traverse the membrane as a helical segment. The Lumenal portion of the chain corresponds to 2466 to 2470 (KTVRE). Residues 2471–2491 (AGILITAAAVTLWENGASSVW) traverse the membrane as a helical segment. Residues 2492 to 3433 (NATTAIGLCH…DTTLVEDTVL (942 aa)) lie on the Cytoplasmic side of the membrane. The mRNA cap 0-1 NS5-type MT domain maps to 2529–2794 (GGAKGRTLGE…DVNLGSGTRA (266 aa)). Residue S2584 coordinates S-adenosyl-L-methionine. At S2584 the chain carries Phosphoserine. K2589 (for 2'-O-MTase activity) is an active-site residue. The S-adenosyl-L-methionine site is built by G2614, W2615, T2632, K2633, E2639, D2659, V2660, D2674, and I2675. D2674 acts as the For 2'-O-MTase activity in catalysis. Residues K2710 and E2746 each act as for 2'-O-MTase activity in the active site. Y2748 contributes to the S-adenosyl-L-methionine binding site. Positions 2917-2919 (REK) match the Nuclear localization signal motif. Positions 2968, 2972, 2977, and 2980 each coordinate Zn(2+). A RdRp catalytic domain is found at 3058-3210 (GKIYADDTAG…KPLDDRFATS (153 aa)). Zn(2+) is bound by residues H3245, C3261, and C3380. Residues 3431-3433 (TVL) carry the PDZ-binding motif.

It in the N-terminal section; belongs to the class I-like SAM-binding methyltransferase superfamily. mRNA cap 0-1 NS5-type methyltransferase family. Homodimer. Interacts (via N-terminus) with host EXOC1 (via C-terminus); this interaction results in EXOC1 degradation through the proteasome degradation pathway. Interacts with host DDX56; this interaction plays an important role in genomic RNA encapsidation. As to quaternary structure, forms heterodimers with envelope protein E in the endoplasmic reticulum and Golgi. In terms of assembly, homodimer; in the endoplasmic reticulum and Golgi. Homodimer; Homohexamer when secreted. NS1 interacts with NS4B. Interacts with host complement protein CFH; this interaction leads to the degradation of C3. As to quaternary structure, forms a heterodimer with serine protease NS3. May form homooligomers. Interacts with human SPCS1. In terms of assembly, forms a heterodimer with NS2B. Interacts with NS4B. Interacts with unphosphorylated RNA-directed RNA polymerase NS5; this interaction stimulates RNA-directed RNA polymerase NS5 guanylyltransferase activity. Interacts with host RTN3; this interaction is important to remodel host cell membranes. As to quaternary structure, interacts with Serine protease/Helicase NS3. Interacts with NS1. In terms of assembly, homodimer. Interacts with host STAT2; this interaction inhibits the phosphorylation of the latter, and, when all viral proteins are present (polyprotein), targets STAT2 for degradation. Post-translationally, specific enzymatic cleavages in vivo yield mature proteins. Cleavages in the lumen of endoplasmic reticulum are performed by host signal peptidase, whereas cleavages in the cytoplasmic side are performed by serine protease NS3. Signal cleavage at the 2K-4B site requires a prior NS3 protease-mediated cleavage at the 4A-2K site. Cleaved in post-Golgi vesicles by a host furin, releasing the mature small envelope protein M, and peptide pr. This cleavage is incomplete as up to 30% of viral particles still carry uncleaved prM. In terms of processing, N-glycosylated. Post-translationally, N-glycosylated. The excreted form is glycosylated and this is required for efficient secretion of the protein from infected cells. Acetylated by host KAT5. Acetylation modulates NS3 RNA-binding and unwinding activities and plays an important positive role for viral replication. In terms of processing, phosphorylated on serines residues. This phosphorylation may trigger NS5 nuclear localization.

It localises to the virion. It is found in the host nucleus. The protein localises to the host cytoplasm. The protein resides in the host perinuclear region. Its subcellular location is the secreted. It localises to the virion membrane. It is found in the host endoplasmic reticulum membrane. It carries out the reaction Selective hydrolysis of -Xaa-Xaa-|-Yaa- bonds in which each of the Xaa can be either Arg or Lys and Yaa can be either Ser or Ala.. It catalyses the reaction RNA(n) + a ribonucleoside 5'-triphosphate = RNA(n+1) + diphosphate. The catalysed reaction is a ribonucleoside 5'-triphosphate + H2O = a ribonucleoside 5'-diphosphate + phosphate + H(+). The enzyme catalyses ATP + H2O = ADP + phosphate + H(+). It carries out the reaction a 5'-end (5'-triphosphoguanosine)-ribonucleoside in mRNA + S-adenosyl-L-methionine = a 5'-end (N(7)-methyl 5'-triphosphoguanosine)-ribonucleoside in mRNA + S-adenosyl-L-homocysteine. It catalyses the reaction a 5'-end (N(7)-methyl 5'-triphosphoguanosine)-ribonucleoside in mRNA + S-adenosyl-L-methionine = a 5'-end (N(7)-methyl 5'-triphosphoguanosine)-(2'-O-methyl-ribonucleoside) in mRNA + S-adenosyl-L-homocysteine + H(+). Functionally, plays a role in virus budding by binding to the cell membrane and gathering the viral RNA into a nucleocapsid that forms the core of a mature virus particle. During virus entry, may induce genome penetration into the host cytoplasm after hemifusion induced by the surface proteins. Can migrate to the cell nucleus where it modulates host functions. Overcomes the anti-viral effects of host EXOC1 by sequestering and degrading the latter through the proteasome degradation pathway. Inhibits RNA silencing by interfering with host Dicer. Its function is as follows. Prevents premature fusion activity of envelope proteins in trans-Golgi by binding to envelope protein E at pH6.0. After virion release in extracellular space, gets dissociated from E dimers. In terms of biological role, acts as a chaperone for envelope protein E during intracellular virion assembly by masking and inactivating envelope protein E fusion peptide. prM is the only viral peptide matured by host furin in the trans-Golgi network probably to avoid catastrophic activation of the viral fusion activity in acidic Golgi compartment prior to virion release. prM-E cleavage is inefficient, and many virions are only partially matured. These uncleaved prM would play a role in immune evasion. Functionally, may play a role in virus budding. Exerts cytotoxic effects by activating a mitochondrial apoptotic pathway through M ectodomain. May display a viroporin activity. Binds to host cell surface receptor and mediates fusion between viral and cellular membranes. Envelope protein is synthesized in the endoplasmic reticulum in the form of heterodimer with protein prM. They play a role in virion budding in the ER, and the newly formed immature particle is covered with 60 spikes composed of heterodimer between precursor prM and envelope protein E. The virion is transported to the Golgi apparatus where the low pH causes dissociation of PrM-E heterodimers and formation of E homodimers. prM-E cleavage is inefficient, and many virions are only partially matured. These uncleaved prM would play a role in immune evasion. Its function is as follows. Involved in immune evasion, pathogenesis and viral replication. Once cleaved off the polyprotein, is targeted to three destinations: the viral replication cycle, the plasma membrane and the extracellular compartment. Essential for viral replication. Required for formation of the replication complex and recruitment of other non-structural proteins to the ER-derived membrane structures. Excreted as a hexameric lipoparticle that plays a role against host immune response. Antagonizing the complement function. Binds to the host macrophages and dendritic cells. Inhibits signal transduction originating from Toll-like receptor 3 (TLR3). In terms of biological role, component of the viral RNA replication complex that functions in virion assembly and antagonizes the host alpha/beta interferon antiviral response. Functionally, required cofactor for the serine protease function of NS3. May have membrane-destabilizing activity and form viroporins. Displays three enzymatic activities: serine protease, NTPase and RNA helicase. NS3 serine protease, in association with NS2B, performs its autocleavage and cleaves the polyprotein at dibasic sites in the cytoplasm: C-prM, NS2A-NS2B, NS2B-NS3, NS3-NS4A, NS4A-2K and NS4B-NS5. NS3 RNA helicase binds RNA and unwinds dsRNA in the 3' to 5' direction. NS3 supports the separation of RNA daughter and template strands during viral replication. The helicase part is involved in the inhibition of phosphorylation of host STAT1, and thereby inhibition of host type-I IFN signaling. In addition, NS3 assists the initiation of replication by unwinding the RNA secondary structure in the 3' non-translated region (NTR). Inhibits STAT2 translocation in the nucleus after IFN-alpha treatment. Its function is as follows. Facilitates host membrane remodelling necessary for viral replication by interacting with host RTN3. Regulates the ATPase activity of the NS3 helicase activity. NS4A allows NS3 helicase to conserve energy during unwinding. In terms of biological role, functions as a signal peptide for NS4B and is required for the interferon antagonism activity of the latter. Functionally, induces the formation of ER-derived membrane vesicles where the viral replication takes place. Inhibits interferon (IFN)-induced host STAT1 phosphorylation and nuclear translocation, thereby preventing the establishment of cellular antiviral state by blocking the IFN-alpha/beta pathway. Inhibits STAT2 translocation in the nucleus after IFN-alpha treatment. Replicates the viral (+) and (-) genome, and performs the capping of genomes in the cytoplasm. NS5 methylates viral RNA cap at guanine N-7 and ribose 2'-O positions. Besides its role in RNA genome replication, also prevents the establishment of cellular antiviral state by blocking the interferon-alpha/beta (IFN-alpha/beta) signaling pathway. Inhibits host JAK1 and TYK2 phosphorylation, thereby preventing activation of JAK-STAT signaling pathway. This chain is Genome polyprotein, found in Aedes (Tropical bont tick).